A 448-amino-acid polypeptide reads, in one-letter code: Receptor homology region, transmembrane domain- and RING domain-containing protein 2 (448 aa).

Positions 1–20 (MNRALVLLLYVCTVSCLASS) are cleaved as a signal peptide. The Lumenal portion of the chain corresponds to 21-163 (KVILMRNNIT…IPSFENSAWS (143 aa)). 2 N-linked (GlcNAc...) asparagine glycosylation sites follow: Asn-28 and Asn-74. The region spanning 60–144 (DACQNLMNKP…ETGEVLKEYA (85 aa)) is the PA domain. An intrachain disulfide couples Cys-62 to Cys-87. A helical membrane pass occupies residues 164 to 184 (IMAVSFISLLAMSAVLATCFF). Topologically, residues 185–448 (VRRHRIRRRT…YASANSLPDC (264 aa)) are cytoplasmic. The RING-type; atypical zinc finger occupies 232 to 274 (CAICLEDYTVGDKLRLLPCCHKFHAACVDSWLTSWRTFCPVCK). Over residues 344 to 378 (QSSSNRRSPPISVSRSSVDLRQQAASPSPSPSQRS) the composition is skewed to low complexity. 2 disordered regions span residues 344–380 (QSSS…RSYI) and 402–424 (MSPY…NYPL). The segment covering 408-423 (SPSNASPAMAGSSNYP) has biased composition (polar residues).

The protein resides in the protein storage vacuole membrane. The protein localises to the golgi apparatus membrane. Involved in the trafficking of vacuolar proteins. May function as a sorting receptor for protein trafficking to the protein storage vacuole (PSV). The protein is Receptor homology region, transmembrane domain- and RING domain-containing protein 2 (RMR2) of Arabidopsis thaliana (Mouse-ear cress).